Consider the following 81-residue polypeptide: Small ribosomal subunit protein bS18A (81 aa).

It belongs to the bacterial ribosomal protein bS18 family. Part of the 30S ribosomal subunit. Forms a tight heterodimer with protein bS6.

In terms of biological role, binds as a heterodimer with protein bS6 to the central domain of the 16S rRNA, where it helps stabilize the platform of the 30S subunit. This Saccharopolyspora erythraea (strain ATCC 11635 / DSM 40517 / JCM 4748 / NBRC 13426 / NCIMB 8594 / NRRL 2338) protein is Small ribosomal subunit protein bS18A.